A 1252-amino-acid polypeptide reads, in one-letter code: DNA-directed RNA polymerase subunit beta (1252 aa).

This sequence belongs to the RNA polymerase beta chain family. The RNAP catalytic core consists of 2 alpha, 1 beta, 1 beta' and 1 omega subunit. When a sigma factor is associated with the core the holoenzyme is formed, which can initiate transcription.

The catalysed reaction is RNA(n) + a ribonucleoside 5'-triphosphate = RNA(n+1) + diphosphate. In terms of biological role, DNA-dependent RNA polymerase catalyzes the transcription of DNA into RNA using the four ribonucleoside triphosphates as substrates. This is DNA-directed RNA polymerase subunit beta from Chlamydia trachomatis serovar D (strain ATCC VR-885 / DSM 19411 / UW-3/Cx).